The chain runs to 520 residues: ATP-dependent clpX-like chaperone, mitochondrial (520 aa).

The transit peptide at 1-13 (MLKSASQNFFRAY) directs the protein to the mitochondrion. 140–147 (GPSGSGKT) contributes to the ATP binding site.

This sequence belongs to the ClpX chaperone family. As to quaternary structure, homohexamer that forms a ring structure; this hexamerization requires ATP binding. Interacts with HEM1.

Its subcellular location is the mitochondrion inner membrane. Functionally, ATP-dependent unfoldase that stimulates the incorporation of the pyridoxal phosphate cofactor into 5-aminolevulinate synthase (HEM1), thereby activating 5-aminolevulinate (ALA) synthesis, the first step in heme biosynthesis. Up-regulates heme biosynthesis. This Saccharomyces cerevisiae (strain ATCC 204508 / S288c) (Baker's yeast) protein is ATP-dependent clpX-like chaperone, mitochondrial.